The sequence spans 341 residues: Endoglucanase 1 (341 aa).

Positions 1 to 16 (MKTATLLAALSVLAGA) are cleaved as a signal peptide. The propeptide occupies 17–30 (LAAPLAGDSALHRR). Glu166 (proton donor) is an active-site residue. The Nucleophile role is filled by Glu275.

This sequence belongs to the glycosyl hydrolase 5 (cellulase A) family.

It catalyses the reaction Endohydrolysis of (1-&gt;4)-beta-D-glucosidic linkages in cellulose, lichenin and cereal beta-D-glucans.. In terms of biological role, has endoglucanase activity on carboxymethyl-cellulose (CMC). The protein is Endoglucanase 1 (CMC1) of Saitozyma flava (Cryptococcus flavus).